The chain runs to 274 residues: MQVKSIKMRWESGGVNYCYLLSDSKNKKSWLIDPAEPPEVLPELTEDEKISVEAIVNTHHHYDHADGNADILKYLKEKNPTSKVEVIGGSKDCPKVTIIPENLKKLHLGDLEITCIRTPCHTRDSICYYVKDPTTDERCIFTGDTLFTAGCGRFFEGTGEEMDIALNNSILETVGRQNWSKTRVYPGHEYTSDNVKFVRKIYPQVGENKALDELEQFCSKHEVTAGRFTLKDEVEFNPFMRLEDPKVQKAAGDTNNSWDRAQIMDKLRAMKNRM.

6 residues coordinate Zn(2+): His-59, His-61, Asp-63, His-64, His-121, and Asp-144. Residues Arg-153 and 188–190 (HEY) each bind substrate. His-188 serves as a coordination point for Zn(2+). Phosphoserine is present on Ser-257. 268–271 (RAMK) lines the substrate pocket.

Belongs to the metallo-beta-lactamase superfamily. Glyoxalase II family. It depends on Zn(2+) as a cofactor.

It is found in the cytoplasm. It catalyses the reaction an S-(2-hydroxyacyl)glutathione + H2O = a 2-hydroxy carboxylate + glutathione + H(+). The enzyme catalyses (R)-S-lactoylglutathione + H2O = (R)-lactate + glutathione + H(+). It participates in secondary metabolite metabolism; methylglyoxal degradation; (R)-lactate from methylglyoxal: step 2/2. Its activity is regulated as follows. Inhibited by various thiol compounds such as glutathione and coenzyme A. In terms of biological role, thiolesterase that catalyzes the hydrolysis of S-D-lactoylglutathione to form glutathione and D-lactic acid. Involved in the metabolism of methylglyoxal, a toxic compound for yeast proliferation, by converting methylglyoxal to lactate via S-D-lactoylglutathione by sequential enzyme reactions catalyzed by glyoxalase I and glyoxalase II. The chain is Hydroxyacylglutathione hydrolase, cytoplasmic isozyme from Saccharomyces cerevisiae (strain ATCC 204508 / S288c) (Baker's yeast).